The primary structure comprises 473 residues: Cysteine--tRNA ligase (473 aa).

Residue C29 coordinates Zn(2+). The 'HIGH' region signature appears at 31–41 (PTVYDRAHLGN). C225, H250, and E254 together coordinate Zn(2+). The short motif at 281–285 (KMSKS) is the 'KMSKS' region element. Position 284 (K284) interacts with ATP.

It belongs to the class-I aminoacyl-tRNA synthetase family. As to quaternary structure, monomer. Requires Zn(2+) as cofactor.

Its subcellular location is the cytoplasm. It carries out the reaction tRNA(Cys) + L-cysteine + ATP = L-cysteinyl-tRNA(Cys) + AMP + diphosphate. This Roseobacter denitrificans (strain ATCC 33942 / OCh 114) (Erythrobacter sp. (strain OCh 114)) protein is Cysteine--tRNA ligase.